We begin with the raw amino-acid sequence, 74 residues long: MKKKVLKHCVILGILGTCLAGIGTGIKVDAATYYGNGLYCNKEKCWVDWNQAKGEIGKIIVNGWVNHGPWAPRR.

Residues 1-30 (MKKKVLKHCVILGILGTCLAGIGTGIKVDA) form the signal peptide.

Its subcellular location is the secreted. Functionally, bacteriocin with antibacterial activity against the Gram-positive Listeria, Enterococcus, Propionibacterium, Staphylococcus and some strains of Clostridium, Lactobacillus and Pediococcus. Lacks antibacterial activity against Gram-negative bacteria. The polypeptide is Bacteriocin hiracin-JM79 (Enterococcus hirae).